A 290-amino-acid chain; its full sequence is Arylamine N-acetyltransferase 2 (290 aa).

Residue Cys-68 is the Acyl-thioester intermediate of the active site. 2 residues coordinate CoA: Thr-103 and Gly-104. 106–107 (IH) contributes to the substrate binding site. Active-site residues include His-107 and Asp-122. CoA-binding residues include Tyr-208, Thr-214, and Ser-287.

It belongs to the arylamine N-acetyltransferase family.

Its subcellular location is the cytoplasm. It catalyses the reaction an arylamine + acetyl-CoA = an N-acetylarylamine + CoA. It carries out the reaction an N-hydroxyarylamine + acetyl-CoA = an N-acetoxyarylamine + CoA. Catalyzes the N- or O-acetylation of various arylamine and heterocyclic amine substrates, and participates in the detoxification of a plethora of hydrazine and arylamine drugs. The polypeptide is Arylamine N-acetyltransferase 2 (NAT2) (Macaca mulatta (Rhesus macaque)).